A 198-amino-acid polypeptide reads, in one-letter code: Cytochrome c oxidase assembly protein CtaG (198 aa).

Residues 1-12 are Cytoplasmic-facing; it reads MADNGQADRKER. A helical; Signal-anchor for type II membrane protein transmembrane segment spans residues 13–35; that stretch reads SNGVIVGTCLAFVAGMIGMAYAA. Residues 36–198 are Periplasmic-facing; that stretch reads VPLYDMFCRV…QVKAKAENKL (163 aa).

It belongs to the COX11/CtaG family.

It is found in the cell inner membrane. Its function is as follows. Exerts its effect at some terminal stage of cytochrome c oxidase synthesis, probably by being involved in the insertion of the copper B into subunit I. This is Cytochrome c oxidase assembly protein CtaG from Rhizobium meliloti (strain 1021) (Ensifer meliloti).